The following is a 622-amino-acid chain: Probable potassium transport system protein Kup (622 aa).

12 consecutive transmembrane segments (helical) span residues 8 to 28 (LAAL…TSVL), 50 to 70 (VLSV…VVLV), 100 to 120 (GWLL…GVIT), 137 to 157 (PHFG…LFAV), 169 to 189 (FGPV…PHIV), 203 to 223 (ALGF…AVVL), 247 to 267 (WFSV…ALLL), 285 to 305 (ALVP…QALI), 337 to 357 (IYLP…VVMF), 366 to 386 (AYGI…FFVI), 392 to 412 (YPLA…LAFF), and 419 to 439 (LLQG…LMMT).

This sequence belongs to the HAK/KUP transporter (TC 2.A.72) family.

The protein resides in the cell inner membrane. The enzyme catalyses K(+)(in) + H(+)(in) = K(+)(out) + H(+)(out). Functionally, transport of potassium into the cell. Likely operates as a K(+):H(+) symporter. This chain is Probable potassium transport system protein Kup, found in Acidovorax ebreus (strain TPSY) (Diaphorobacter sp. (strain TPSY)).